Here is a 971-residue protein sequence, read N- to C-terminus: Nuclear factor NF-kappa-B p105 subunit (971 aa).

The RHD domain occupies 40 to 365; it reads PYLQILEQPK…EVQRKRQKLM (326 aa). Cys-59 is modified (S-nitrosocysteine; alternate). A lipid anchor (S-(15-deoxy-Delta12,14-prostaglandin J2-9-yl)cysteine; alternate) is attached at Cys-59. Residue Lys-323 forms a Glycyl lysine isopeptide (Lys-Gly) (interchain with G-Cter in SUMO2) linkage. At Ser-335 the chain carries Phosphoserine; by PKA. The Nuclear localization signal signature appears at 358–363; sequence QRKRQK. The segment at 370-392 is GRR; the sequence is DSFGGGSGAGAGGGGMFGSGGGG. The segment at 433–971 is interaction with CFLAR; sequence INTKFKNGPK…GQEGPIEGKI (539 aa). An N6-acetyllysine; by EP300 modification is found at Lys-438. Positions 439–470 are disordered; the sequence is NGPKDCAKSDDEESLTLPEKETEGEGPSLPMA. Phosphoserine is present on Ser-447. ANK repeat units follow at residues 538-567, 577-606, 610-639, 646-675, 680-710, and 714-743; these read NGDS…GLIS, LYQT…DLSL, WGNS…AAPL, EGLN…EVNA, SGRT…HVDS, and DGTT…DPLV. Positions 646–680 are essential for interaction with HIF1AN; the sequence is EGLNAIHIAVMSNSLPCLLLLVAAGAEVNAQEQKS. Asn-674 is subject to (3S)-3-hydroxyasparagine; by HIF1AN. A Phosphoserine modification is found at Ser-755. The stretch at 767-797 is one ANK 7 repeat; sequence PGTTPLDMAANWQVFDILNGKPYEPVFTSDD. Residues 801 to 888 enclose the Death domain; that stretch reads QGDMKQLTED…EAIEVIQAAF (88 aa). Ser-896 carries the post-translational modification Phosphoserine. Phosphoserine; by GSK3-beta; in vitro is present on Ser-910. Ser-926 carries the phosphoserine modification. Residues Ser-930 and Ser-935 each carry the phosphoserine; by IKKB modification. Phosphoserine is present on Ser-940. A Phosphothreonine modification is found at Thr-946.

As to quaternary structure, component of the NF-kappa-B p65-p50 complex. Homodimer; component of the NF-kappa-B p50-p50 complex. Component of the NF-kappa-B p105-p50 complex. Component of the NF-kappa-B p50-c-Rel complex. Component of a complex consisting of the NF-kappa-B p50-p50 homodimer and BCL3. Also interacts with MAP3K8. NF-kappa-B p50 subunit interacts with NCOA3 coactivator, which may coactivate NF-kappa-B dependent expression via its histone acetyltransferase activity. Interacts with TSC22D3; this interaction prevents nuclear translocation and DNA-binding. Interacts with SPAG9 and UNC5CL. NFKB1/p105 interacts with CFLAR; the interaction inhibits p105 processing into p50. NFKB1/p105 forms a ternary complex with MAP3K8 and TNIP2. Interacts with GSK3B; the interaction prevents processing of p105 to p50. NFKB1/p50 interacts with NFKBIE. NFKB1/p50 interacts with NFKBIZ. Nuclear factor NF-kappa-B p50 subunit interacts with NFKBID. Directly interacts with MEN1. Interacts with HIF1AN. Interacts with FEM1AA; interaction is direct. Post-translationally, generation of the NF-kappa-B p50 (Nuclear factor NF-kappa-B p50 subunit) transcription factor takes place both cotranslationally and post-translationally via non-mutually exclusive mechanisms. A cotranslational processing allows the production of both p50 and p105 (Nuclear factor NF-kappa-B p105 subunit) from a single NFKB1 mRNA. While translation occurs, the particular unfolded structure after the GRR repeat region acts as a substrate for the proteasome, promoting degradation of the C-terminus. The GRR acts as a proteasomal 'stop signal', protecting the region upstream of the GRR from degradation and promoting generation of p50. It is unclear if limited proteasome degradation during cotranslational processing depends on ubiquitination. NF-kappa-B p50 is also generated post-translationally following ubiquitination by the KPC complex, leading to limited processing by the proteasome downstream of the GRR region, thereby generating p50. In terms of processing, phosphorylation at the C-terminus by IKBKB/IKKB acts as a signal for ubiquitination and promotes either complete degradation or processing to generate the NF-kappa-B p50 (Nuclear factor NF-kappa-B p50 subunit). Phosphorylation at Ser-910 primes p105 for proteolytic processing in response to TNF-alpha stimulation. Phosphorylation at Ser-926, Ser-930 and Ser-935 are required for BTRC/BTRCP-mediated ubiquitination and proteolysis. Phosphorylation at Ser-930 is also required for ubiquitination by the KPC complex and limited processing to generate NF-kappa-B p50 (Nuclear factor NF-kappa-B p50 subunit). Polyubiquitinated at multiple Lys residues in the C-terminus. Polyubiquitinated by the SCF(FBXW11) and SCF(BTRC) complexes following phosphorylation at Ser-926, Ser-930 and Ser-935, leading to its complete degradation. In contrast, polyubiquitination by the KPC complex following phosphorylation at Ser-930 leads to limited proteosomal processing and generation of the active NF-kappa-B p50 (Nuclear factor NF-kappa-B p50 subunit). Post-translationally, S-nitrosylation of Cys-59 affects DNA binding. In terms of processing, the covalent modification of cysteine by 15-deoxy-Delta12,14-prostaglandin-J2 is autocatalytic and reversible. It may occur as an alternative to other cysteine modifications, such as S-nitrosylation and S-palmitoylation.

Its subcellular location is the cytoplasm. It is found in the nucleus. Functionally, NF-kappa-B is a pleiotropic transcription factor present in almost all cell types and is the endpoint of a series of signal transduction events that are initiated by a vast array of stimuli related to many biological processes such as inflammation, immunity, differentiation, cell growth, tumorigenesis and apoptosis. NF-kappa-B is a homo- or heterodimeric complex formed by the Rel-like domain-containing proteins RELA/p65, RELB, NFKB1/p105, NFKB1/p50, REL and NFKB2/p52 and the heterodimeric p65-p50 complex appears to be most abundant one. The dimers bind at kappa-B sites in the DNA of their target genes and the individual dimers have distinct preferences for different kappa-B sites that they can bind with distinguishable affinity and specificity. Different dimer combinations act as transcriptional activators or repressors, respectively. NF-kappa-B is controlled by various mechanisms of post-translational modification and subcellular compartmentalization as well as by interactions with other cofactors or corepressors. NF-kappa-B complexes are held in the cytoplasm in an inactive state complexed with members of the NF-kappa-B inhibitor (I-kappa-B) family. In a conventional activation pathway, I-kappa-B is phosphorylated by I-kappa-B kinases (IKKs) in response to different activators, subsequently degraded thus liberating the active NF-kappa-B complex which translocates to the nucleus. NF-kappa-B heterodimeric p65-p50 and RelB-p50 complexes are transcriptional activators. The NF-kappa-B p50-p50 homodimer is a transcriptional repressor, but can act as a transcriptional activator when associated with BCL3. NFKB1 appears to have dual functions such as cytoplasmic retention of attached NF-kappa-B proteins by p105 and generation of p50 by a cotranslational processing. The proteasome-mediated process ensures the production of both p50 and p105 and preserves their independent function, although processing of NFKB1/p105 also appears to occur post-translationally. p50 binds to the kappa-B consensus sequence 5'-GGRNNYYCC-3', located in the enhancer region of genes involved in immune response and acute phase reactions. Plays a role in the regulation of apoptosis. In a complex with MAP3K8, NFKB1/p105 represses MAP3K8-induced MAPK signaling; active MAP3K8 is released by proteasome-dependent degradation of NFKB1/p105. P105 is the precursor of the active p50 subunit (Nuclear factor NF-kappa-B p50 subunit) of the nuclear factor NF-kappa-B. Acts as a cytoplasmic retention of attached NF-kappa-B proteins by p105. In terms of biological role, constitutes the active form, which associates with RELA/p65 to form the NF-kappa-B p65-p50 complex to form a transcription factor. Together with RELA/p65, binds to the kappa-B consensus sequence 5'-GGRNNYYCC-3', located in the enhancer region of genes involved in immune response and acute phase reactions. Its function is as follows. Isoform 3 (p98) (but not p84 or p105) acts as a transactivator of NF-kappa-B-regulated gene expression. Functionally, acts as an inhibitor of transactivation of p50 NF-kappa-B subunit, probably by sequestering it in the cytoplasm. The protein is Nuclear factor NF-kappa-B p105 subunit (Nfkb1) of Mus musculus (Mouse).